We begin with the raw amino-acid sequence, 349 residues long: MTDPSRLVTPERRGDDLGDAALRPQNLSEFVGQQQARANLQVFIDAARKRKEALDHVLFVGPPGLGKTTLAQIVARELGVGFRATSGPVIAKAGDLAALLTNLEERDVLFIDEIHRLSPSVEEVLYPAMEDFQLDLIIGEGPAARSVKIDLSKFTLVGATTRAGLLTNPLRDRFGIPIRLNFYTIEELESIVTRGARVLGTPITADGANEIARRARGTPRIAGRLLRRVRDFASAADAEAIDRSIADHALGALEVDSAGLDAMDRRYLTTIALNYGGGPVGVETMAAALSEPRDAIEDIIEPYLIQCGYLQRTPRGRLLTDHAFRHLGLAAPSRDPAQFGLFGDTGDQE.

The large ATPase domain (RuvB-L) stretch occupies residues 1–183; sequence MTDPSRLVTP…FGIPIRLNFY (183 aa). ATP is bound by residues Leu-22, Arg-23, Gly-64, Lys-67, Thr-68, Thr-69, 130 to 132, Arg-173, Tyr-183, and Arg-220; that span reads EDF. Position 68 (Thr-68) interacts with Mg(2+). A small ATPAse domain (RuvB-S) region spans residues 184–254; sequence TIEELESIVT…IADHALGALE (71 aa). Residues 257-349 are head domain (RuvB-H); the sequence is SAGLDAMDRR…GLFGDTGDQE (93 aa). Residues Arg-293, Arg-312, and Arg-317 each contribute to the DNA site.

Belongs to the RuvB family. In terms of assembly, homohexamer. Forms an RuvA(8)-RuvB(12)-Holliday junction (HJ) complex. HJ DNA is sandwiched between 2 RuvA tetramers; dsDNA enters through RuvA and exits via RuvB. An RuvB hexamer assembles on each DNA strand where it exits the tetramer. Each RuvB hexamer is contacted by two RuvA subunits (via domain III) on 2 adjacent RuvB subunits; this complex drives branch migration. In the full resolvosome a probable DNA-RuvA(4)-RuvB(12)-RuvC(2) complex forms which resolves the HJ.

The protein localises to the cytoplasm. The catalysed reaction is ATP + H2O = ADP + phosphate + H(+). The RuvA-RuvB-RuvC complex processes Holliday junction (HJ) DNA during genetic recombination and DNA repair, while the RuvA-RuvB complex plays an important role in the rescue of blocked DNA replication forks via replication fork reversal (RFR). RuvA specifically binds to HJ cruciform DNA, conferring on it an open structure. The RuvB hexamer acts as an ATP-dependent pump, pulling dsDNA into and through the RuvAB complex. RuvB forms 2 homohexamers on either side of HJ DNA bound by 1 or 2 RuvA tetramers; 4 subunits per hexamer contact DNA at a time. Coordinated motions by a converter formed by DNA-disengaged RuvB subunits stimulates ATP hydrolysis and nucleotide exchange. Immobilization of the converter enables RuvB to convert the ATP-contained energy into a lever motion, pulling 2 nucleotides of DNA out of the RuvA tetramer per ATP hydrolyzed, thus driving DNA branch migration. The RuvB motors rotate together with the DNA substrate, which together with the progressing nucleotide cycle form the mechanistic basis for DNA recombination by continuous HJ branch migration. Branch migration allows RuvC to scan DNA until it finds its consensus sequence, where it cleaves and resolves cruciform DNA. This is Holliday junction branch migration complex subunit RuvB from Rhodopseudomonas palustris (strain TIE-1).